The sequence spans 738 residues: Adhesion G protein-coupled receptor L4 (738 aa).

Residues 1-19 form the signal peptide; the sequence is MRLLLLLVGLSTLLNHSYT. An EGF-like 1 domain is found at 20-56; the sequence is QNCKTPCLPNAKCEVLDEVAACFCSTGYTGNGITICE. At 20 to 480 the chain is on the extracellular side; it reads QNCKTPCLPN…DYNILTRITQ (461 aa). Intrachain disulfides connect Cys-22-Cys-32, Cys-26-Cys-41, Cys-43-Cys-55, Cys-61-Cys-73, Cys-67-Cys-82, Cys-84-Cys-105, Cys-111-Cys-123, Cys-117-Cys-132, and Cys-134-Cys-155. The EGF-like 2; calcium-binding domain occupies 57–106; it reads DVDECNETSVCGDHAVCENTNGGFSCFCVEGYQTSTGKTQFTPNDGSYCQ. N-linked (GlcNAc...) asparagine glycosylation occurs at Asn-62. The EGF-like 3; calcium-binding domain maps to 107 to 156; sequence DVDECNETSVCGDHAVCENTNGGFSCFCVEGYQTSTGKTQFTPNDGSYCQ. Asn-112 is a glycosylation site (N-linked (GlcNAc...) asparagine). Asn-175, Asn-226, Asn-297, Asn-421, Asn-429, and Asn-443 each carry an N-linked (GlcNAc...) asparagine glycan. Residues 292 to 467 enclose the GAIN-B domain; that stretch reads TQFDMNSTDL…AILMSPSTSI (176 aa). 2 cysteine pairs are disulfide-bonded: Cys-417–Cys-449 and Cys-437–Cys-451. The GPS stretch occupies residues 417–467; sequence CAFWNYSVDDMNNGSWSSEGCELTYSNDTHTSCRCSHLTHFAILMSPSTSI. A helical transmembrane segment spans residues 481–501; the sequence is LGIIISLICLAICIFTFWFFS. The Cytoplasmic segment spans residues 502–522; the sequence is EIQSTRTTIHKNLCCSLFLAQ. Residues 523–543 traverse the membrane as a helical segment; sequence LVFLVGININTNKLVCSIIAG. Residues 544 to 547 are Extracellular-facing; that stretch reads LLHY. Residues 548 to 568 traverse the membrane as a helical segment; that stretch reads FFLAAFAWMCIEGIYLYLIVV. Residues 569 to 580 are Cytoplasmic-facing; it reads GLIYNKGFLHKN. Residues 581–601 traverse the membrane as a helical segment; sequence FYIFGYLSPAVVVGFSASLGY. At 602–621 the chain is on the extracellular side; it reads RYYGTTKVCWLSTENNFIWS. A helical membrane pass occupies residues 622 to 642; sequence FIGPACLIILVNLLAFGVIIY. Residues 643-666 are Cytoplasmic-facing; sequence KVFRHTAGLKPEVSCYENIRSCAR. A helical transmembrane segment spans residues 667-687; the sequence is GALALLFLLGTTWTFGVLHVV. Over 688–694 the chain is Extracellular; the sequence is HASVVTA. The helical transmembrane segment at 695–715 threads the bilayer; that stretch reads YLFTVSNAFQGMFIFLFLCVL. The Cytoplasmic portion of the chain corresponds to 716-738; sequence SRKIQEEYYRLFKNVPCCFECLR.

The protein belongs to the G-protein coupled receptor 2 family. Adhesion G-protein coupled receptor (ADGR) subfamily. In terms of assembly, heterodimer of 2 chains generated by proteolytic processing; the large extracellular N-terminal fragment and the membrane-bound C-terminal fragment predominantly remain associated and non-covalently linked. Proteolytically cleaved into 2 subunits, an extracellular alpha subunit and a seven-transmembrane subunit. In terms of processing, glycosylated. As to expression, abundantly expressed in heart, lung, and kidney. Less evident expression is observed in brain, skeletal muscle, liver and spleen. No expression is detected in testis.

The protein localises to the cell membrane. Endothelial orphan receptor that acts as a key regulator of angiogenesis. The polypeptide is Adhesion G protein-coupled receptor L4 (Adgrl4) (Rattus norvegicus (Rat)).